The chain runs to 684 residues: Glycine--tRNA ligase beta subunit (684 aa).

This sequence belongs to the class-II aminoacyl-tRNA synthetase family. Tetramer of two alpha and two beta subunits.

The protein resides in the cytoplasm. The catalysed reaction is tRNA(Gly) + glycine + ATP = glycyl-tRNA(Gly) + AMP + diphosphate. The chain is Glycine--tRNA ligase beta subunit from Pseudomonas syringae pv. tomato (strain ATCC BAA-871 / DC3000).